Reading from the N-terminus, the 62-residue chain is Large ribosomal subunit protein bL28 (62 aa).

The interval 1 to 23 (MGKQCYVTGRKASTGNRRSHALN) is disordered.

This sequence belongs to the bacterial ribosomal protein bL28 family.

The sequence is that of Large ribosomal subunit protein bL28 from Staphylococcus carnosus (strain TM300).